The chain runs to 677 residues: Methionine--tRNA ligase (677 aa).

The 'HIGH' region signature appears at Pro-15–His-25. Positions 146, 149, 159, and 162 each coordinate Zn(2+). Positions Lys-333–Ser-337 match the 'KMSKS' region motif. ATP is bound at residue Lys-336. Residues Asp-575 to Lys-677 form the tRNA-binding domain.

The protein belongs to the class-I aminoacyl-tRNA synthetase family. MetG type 1 subfamily. In terms of assembly, homodimer. The cofactor is Zn(2+).

Its subcellular location is the cytoplasm. It carries out the reaction tRNA(Met) + L-methionine + ATP = L-methionyl-tRNA(Met) + AMP + diphosphate. Functionally, is required not only for elongation of protein synthesis but also for the initiation of all mRNA translation through initiator tRNA(fMet) aminoacylation. In Escherichia coli (strain SE11), this protein is Methionine--tRNA ligase.